The chain runs to 147 residues: Gastrula-specific protein 17 (147 aa).

Residues 1 to 119 (MSQNLDFLAL…TQVYGNHQPG (119 aa)) form a disordered region. Polar residues-rich tracts occupy residues 20–36 (SPTS…STPP), 45–57 (RQIS…YTNP), and 74–88 (LLQN…SPTA).

In Xenopus laevis (African clawed frog), this protein is Gastrula-specific protein 17 (gs17).